Consider the following 512-residue polypeptide: Glutamate--tRNA ligase (512 aa).

Positions 11–21 (PSPTGALHIGG) match the 'HIGH' region motif. The 'KMSKS' region motif lies at 263–267 (KLSKR). Residue Lys266 coordinates ATP.

The protein belongs to the class-I aminoacyl-tRNA synthetase family. Glutamate--tRNA ligase type 1 subfamily. In terms of assembly, monomer.

It localises to the cytoplasm. The catalysed reaction is tRNA(Glu) + L-glutamate + ATP = L-glutamyl-tRNA(Glu) + AMP + diphosphate. Its function is as follows. Catalyzes the attachment of glutamate to tRNA(Glu) in a two-step reaction: glutamate is first activated by ATP to form Glu-AMP and then transferred to the acceptor end of tRNA(Glu). In Amoebophilus asiaticus (strain 5a2), this protein is Glutamate--tRNA ligase.